Consider the following 343-residue polypeptide: Cytoplasmic tRNA 2-thiolation protein 1 (343 aa).

The protein belongs to the TtcA family. CTU1/NCS6/ATPBD3 subfamily.

Its subcellular location is the cytoplasm. It functions in the pathway tRNA modification; 5-methoxycarbonylmethyl-2-thiouridine-tRNA biosynthesis. Its function is as follows. Plays a central role in 2-thiolation of mcm(5)S(2)U at tRNA wobble positions of tRNA(Lys), tRNA(Glu) and tRNA(Gln). Directly binds tRNAs and probably acts by catalyzing adenylation of tRNAs, an intermediate required for 2-thiolation. It is unclear whether it acts as a sulfurtransferase that transfers sulfur from thiocarboxylated URM1 onto the uridine of tRNAs at wobble position. This chain is Cytoplasmic tRNA 2-thiolation protein 1, found in Drosophila erecta (Fruit fly).